Reading from the N-terminus, the 111-residue chain is Large ribosomal subunit protein uL22 (111 aa).

Belongs to the universal ribosomal protein uL22 family. In terms of assembly, part of the 50S ribosomal subunit.

In terms of biological role, this protein binds specifically to 23S rRNA; its binding is stimulated by other ribosomal proteins, e.g. L4, L17, and L20. It is important during the early stages of 50S assembly. It makes multiple contacts with different domains of the 23S rRNA in the assembled 50S subunit and ribosome. Functionally, the globular domain of the protein is located near the polypeptide exit tunnel on the outside of the subunit, while an extended beta-hairpin is found that lines the wall of the exit tunnel in the center of the 70S ribosome. In Clostridium perfringens (strain ATCC 13124 / DSM 756 / JCM 1290 / NCIMB 6125 / NCTC 8237 / Type A), this protein is Large ribosomal subunit protein uL22.